The primary structure comprises 443 residues: Na(+)-translocating NADH-quinone reductase subunit A (443 aa).

The protein belongs to the NqrA family. In terms of assembly, composed of six subunits; NqrA, NqrB, NqrC, NqrD, NqrE and NqrF.

It catalyses the reaction a ubiquinone + n Na(+)(in) + NADH + H(+) = a ubiquinol + n Na(+)(out) + NAD(+). Functionally, NQR complex catalyzes the reduction of ubiquinone-1 to ubiquinol by two successive reactions, coupled with the transport of Na(+) ions from the cytoplasm to the periplasm. NqrA to NqrE are probably involved in the second step, the conversion of ubisemiquinone to ubiquinol. This chain is Na(+)-translocating NADH-quinone reductase subunit A, found in Actinobacillus succinogenes (strain ATCC 55618 / DSM 22257 / CCUG 43843 / 130Z).